Consider the following 370-residue polypeptide: Ubiquitin carboxyl-terminal hydrolase 12 (370 aa).

Residues 1-4 (MEIL) carry the Required for plasma membrane localization of USP12/WDR20 motif. The 331-residue stretch at 39–369 (FGLVNFGNTC…SGYILFYQSR (331 aa)) folds into the USP domain. Cysteine 48 functions as the Nucleophile in the catalytic mechanism. The disordered stretch occupies residues 145–169 (KQEKQNGRLPNGNIDNENNNSTPDP). The span at 157 to 168 (NIDNENNNSTPD) shows a compositional bias: polar residues. Residues cysteine 186, cysteine 189, cysteine 233, and cysteine 236 each coordinate Zn(2+). Residue histidine 317 is the Proton acceptor of the active site.

Belongs to the peptidase C19 family. USP12/USP46 subfamily. In terms of assembly, interacts with WDR48. Interacts with WDR20; this interaction promotes translocation of the USP12 complex to the plasma membrane. Component of the USP12-WDR20-WDR48 deubiquitinating complex. Component of the USP12-DMWD-WDR48 deubiquitinating complex. Interacts with PHLPP1. Interacts with RBPJ. Interacts with CBP; this interaction blocks the acetyltransferase activity of CREBBP. Interacts with ITCH; the interaction is more efficient when both USP12 and WDR48/UAF1 are involved and may mediate recruitment of the USP12 deubiquitinating complex to Notch. Interacts with OPTN and SQSTM1/p62; the interaction is independent of deubiquitinase activity and may be involved in regulation of autophagic flux. As to quaternary structure, (Microbial infection) Interacts with Epstein-Barr virus protein EBNA3.

It is found in the nucleus. Its subcellular location is the cytoplasm. The protein localises to the cell membrane. The enzyme catalyses Thiol-dependent hydrolysis of ester, thioester, amide, peptide and isopeptide bonds formed by the C-terminal Gly of ubiquitin (a 76-residue protein attached to proteins as an intracellular targeting signal).. Its activity is regulated as follows. Activated by interaction with WDR20, WDR48 and DMWD through different allosteric mechanisms. Functionally, deubiquitinating enzyme that plays various roles in the regulation of the immune response and inflammation. During TCR engagement and activation, translocates into the cytoplasm and deubiquitinates its substrates LAT and TRAT1 and prevents their lysosome-dependent degradation to stabilize the TCR signaling complex at the plasma membrane. Plays an essential role in the selective LPS-induced macrophage response through the activation of NF-kappa-B pathway. In addition, promotes that antiviral immune response through targeting DNA sensor IFI16 to inhibit its proteasome-dependent degradation. Participates in the interferon signaling pathway and antiviral response independently of its deubiquitinase activity by maintaining nuclear phosphorylated STAT1 levels via inhibition of its CREBBP-mediated acetylation and subsequent dephosphorylation. Plays an intrinsic role in promoting the differentiation, activation and proliferation of CD4(+) T-cell by activating the NF-kappa-B signaling pathway through deubiquitinating and stabilizing B-cell lymphoma/leukemia 10/BCL10. In myeloid-derived suppressor cells promotes the activation of the NF-kappa-B via deubiquitination and stabilization of RELA. Regulates the 'Lys-63'-linked polyubiquitin chains of BAX and thereby modulates the mitochondrial apoptotic process. Negative regulator of NOTCH signaling that specifically deubiquitinates non-activated NOTCH receptors to target them for lysosomal degradation; deubiquitination of NOTCH stimulates its transport form late endosomes to lysosomes. Protects neurons against HTT/huntingtin-induced polyglutamine expansion-dependent neurodegeneration through regulation of autophagic flux. This function is independent of deubiquitinase activity or of other components of the USP12-WDR20-WDR48 deubiquitinating complex. In complex with WDR48, acts as a potential tumor suppressor by positively regulating PHLPP1 stability. In terms of biological role, (Microbial infection) Forms a complex with Epstein-Barr virus protein EBNA3 which is an active deubiquitinase activity that may select specific substrates to promote B-lymphocyte transformation. The protein is Ubiquitin carboxyl-terminal hydrolase 12 (USP12) of Homo sapiens (Human).